A 314-amino-acid polypeptide reads, in one-letter code: 2,3-dihydroxyphenylpropionate/2,3-dihydroxicinnamic acid 1,2-dioxygenase (314 aa).

The active-site Proton donor is the histidine 115. The active-site Proton acceptor is histidine 179.

Belongs to the LigB/MhpB extradiol dioxygenase family. In terms of assembly, homotetramer. Requires Fe(2+) as cofactor.

It carries out the reaction 3-(2,3-dihydroxyphenyl)propanoate + O2 = (2Z,4E)-2-hydroxy-6-oxonona-2,4-dienedioate + H(+). The catalysed reaction is (2E)-3-(2,3-dihydroxyphenyl)prop-2-enoate + O2 = (2Z,4E,7E)-2-hydroxy-6-oxonona-2,4,7-trienedioate + H(+). Its pathway is aromatic compound metabolism; 3-phenylpropanoate degradation. In terms of biological role, catalyzes the non-heme iron(II)-dependent oxidative cleavage of 2,3-dihydroxyphenylpropionic acid and 2,3-dihydroxicinnamic acid into 2-hydroxy-6-ketononadienedioate and 2-hydroxy-6-ketononatrienedioate, respectively. The sequence is that of 2,3-dihydroxyphenylpropionate/2,3-dihydroxicinnamic acid 1,2-dioxygenase from Rhodococcus jostii (strain RHA1).